Here is a 131-residue protein sequence, read N- to C-terminus: Small ribosomal subunit protein uS8 (131 aa).

This sequence belongs to the universal ribosomal protein uS8 family. In terms of assembly, part of the 30S ribosomal subunit. Contacts proteins S5 and S12.

One of the primary rRNA binding proteins, it binds directly to 16S rRNA central domain where it helps coordinate assembly of the platform of the 30S subunit. The chain is Small ribosomal subunit protein uS8 from Helicobacter acinonychis (strain Sheeba).